Reading from the N-terminus, the 1178-residue chain is Pyruvate carboxylase 1 (1178 aa).

Positions 18–470 (EKNKILVANR…WTTFIDDTPQ (453 aa)) constitute a Biotin carboxylation domain. The ATP site is built by lysine 136, glutamate 220, and histidine 255. In terms of domain architecture, ATP-grasp spans 140-337 (RNLAAKANVP…IVAAQIQIAA (198 aa)). Arginine 312 is an active-site residue. The 268-residue stretch at 557–824 (TLLMDTTWRD…DTGINVEHVR (268 aa)) folds into the Pyruvate carboxyltransferase domain. Substrate is bound by residues 565–569 (RDAHQ) and arginine 638. A divalent metal cation is bound at residue aspartate 566. A divalent metal cation is bound by residues lysine 734, histidine 764, and histidine 766. At lysine 734 the chain carries N6-carboxylysine. Threonine 898 provides a ligand contact to substrate. The Biotinyl-binding domain maps to 1094–1169 (KADMHDPLHI…DSSDLLVLLE (76 aa)). Position 1135 is an N6-biotinyllysine (lysine 1135).

Homotetramer. The cofactor is biotin. It depends on Zn(2+) as a cofactor.

The protein localises to the cytoplasm. The catalysed reaction is hydrogencarbonate + pyruvate + ATP = oxaloacetate + ADP + phosphate + H(+). The protein operates within carbohydrate biosynthesis; gluconeogenesis. Its function is as follows. Pyruvate carboxylase catalyzes a 2-step reaction, involving the ATP-dependent carboxylation of the covalently attached biotin in the first step and the transfer of the carboxyl group to pyruvate in the second. This chain is Pyruvate carboxylase 1 (PYC1), found in Saccharomyces cerevisiae (strain ATCC 204508 / S288c) (Baker's yeast).